The sequence spans 286 residues: Homoserine kinase (286 aa).

Residue 78-88 (PLARGLGSSSS) participates in ATP binding.

The protein belongs to the GHMP kinase family. Homoserine kinase subfamily.

It localises to the cytoplasm. It carries out the reaction L-homoserine + ATP = O-phospho-L-homoserine + ADP + H(+). Its pathway is amino-acid biosynthesis; L-threonine biosynthesis; L-threonine from L-aspartate: step 4/5. In terms of biological role, catalyzes the ATP-dependent phosphorylation of L-homoserine to L-homoserine phosphate. The sequence is that of Homoserine kinase from Streptococcus suis (strain 98HAH33).